Here is a 577-residue protein sequence, read N- to C-terminus: Cryptochrome DASH, chloroplastic/mitochondrial (577 aa).

A chloroplast and mitochondrion-targeting transit peptide spans 1 to 53; it reads MIKQPFLLTKFTPFSSKSKHTLFTFHCNFSIKMASLTARTTPTVQNVPGLTPE. A Photolyase/cryptochrome alpha/beta domain is found at 78-219; sequence GVAIVWFRND…GNDPGSGNTT (142 aa). The tract at residues 550–577 is disordered; sequence TKKTGDSKTAFSSRRGRPEDNRRKRHGY.

Belongs to the DNA photolyase class-1 family. It depends on FAD as a cofactor. (6R)-5,10-methylene-5,6,7,8-tetrahydrofolate is required as a cofactor. In terms of tissue distribution, expressed in the endosperm and embryo 96 hours after seed imbibition. In the embryo, detected in the root meristem, the root cap, the shoot apical meristem and the epidermis of cotyledons. In adult plants, detcted in roots, the whole leaf lamina, the stem and in glandular trichomes.

Its subcellular location is the plastid. The protein resides in the chloroplast. It localises to the mitochondrion. May have a photoreceptor function and might bind ss- and ds-DNA in a sequence non-specific manner. Lacks photolyase activity. Has a potential role in detecting the dawn and dusk transitions and, consequently, in circadian input pathways. This Solanum lycopersicum (Tomato) protein is Cryptochrome DASH, chloroplastic/mitochondrial.